The chain runs to 266 residues: MIYSRSKLPSEGEILIATVKQVFDYGSYVSLDEYGGLQAFLPWSEVSSKWVKNIRDVLKENRKVIVKVIRVDRRKGTVDVSLKKVTDDERRKKNLQWKKIQRLDKILELVSQKLKLSEKDAWEQVAWKLEAKYGDPITAIEKAVKEGEKILIDAGVPEIWVKPLLEEASKHAEERKVKMSGLITVRTNEPLGVEKIKEVISKALENIEQDYESLLNIKIYTIGAPRYRVDVVGTNPKEASEALNQIISNLIKIGKEENVDISVVKK.

The region spanning 12–83 (GEILIATVKQ…RKGTVDVSLK (72 aa)) is the S1 motif domain.

Belongs to the eIF-2-alpha family. As to quaternary structure, heterotrimer composed of an alpha, a beta and a gamma chain.

In terms of biological role, eIF-2 functions in the early steps of protein synthesis by forming a ternary complex with GTP and initiator tRNA. This chain is Translation initiation factor 2 subunit alpha, found in Saccharolobus solfataricus (strain ATCC 35092 / DSM 1617 / JCM 11322 / P2) (Sulfolobus solfataricus).